Reading from the N-terminus, the 184-residue chain is GTP cyclohydrolase 1 (184 aa).

The Zn(2+) site is built by cysteine 75, histidine 78, and cysteine 146.

This sequence belongs to the GTP cyclohydrolase I family. In terms of assembly, toroid-shaped homodecamer, composed of two pentamers of five dimers.

The enzyme catalyses GTP + H2O = 7,8-dihydroneopterin 3'-triphosphate + formate + H(+). It participates in cofactor biosynthesis; 7,8-dihydroneopterin triphosphate biosynthesis; 7,8-dihydroneopterin triphosphate from GTP: step 1/1. The protein is GTP cyclohydrolase 1 of Streptococcus pneumoniae serotype 2 (strain D39 / NCTC 7466).